A 203-amino-acid chain; its full sequence is E3 ubiquitin-protein ligase rnf152-B (203 aa).

The segment at 12–55 (CQICFNYYSPRRRPKLLDCKHTCCSVCLQQMRASQKDLRCPWCR) adopts an RING-type zinc-finger fold. A helical transmembrane segment spans residues 167–187 (SGVCTVILVACVLVFLLGIVL).

It belongs to the RNF152 family.

It is found in the lysosome membrane. It carries out the reaction S-ubiquitinyl-[E2 ubiquitin-conjugating enzyme]-L-cysteine + [acceptor protein]-L-lysine = [E2 ubiquitin-conjugating enzyme]-L-cysteine + N(6)-ubiquitinyl-[acceptor protein]-L-lysine.. It functions in the pathway protein modification; protein ubiquitination. In terms of biological role, E3 ubiquitin-protein ligase that acts as a negative regulator of mTORC1 signaling by mediating ubiquitination of RagA/RRAGA and RHEB. Catalyzes 'Lys-63'-linked polyubiquitination of RagA/RRAGA in response to amino acid starvation, thereby regulating mTORC1 signaling. Also mediates monoubiquitination of RHEB, promoting its association with the TSC-TBC complex and subsequent inhibition. Also mediates 'Lys-48'-linked polyubiquitination of target proteins and their subsequent targeting to the proteasome for degradation. The sequence is that of E3 ubiquitin-protein ligase rnf152-B from Xenopus laevis (African clawed frog).